We begin with the raw amino-acid sequence, 501 residues long: Probable cytochrome P450 28d2 (501 aa).

Cysteine 446 contacts heme.

The protein belongs to the cytochrome P450 family. The cofactor is heme.

The protein resides in the endoplasmic reticulum membrane. The protein localises to the microsome membrane. Its function is as follows. May be involved in the metabolism of insect hormones and in the breakdown of synthetic insecticides. The polypeptide is Probable cytochrome P450 28d2 (Cyp28d2) (Drosophila melanogaster (Fruit fly)).